A 104-amino-acid polypeptide reads, in one-letter code: L-rhamnose mutarotase (104 aa).

Tyr18 is a substrate binding site. Catalysis depends on His22, which acts as the Proton donor. Substrate is bound by residues Tyr41 and 76-77 (WW).

This sequence belongs to the rhamnose mutarotase family. In terms of assembly, homodimer.

The protein localises to the cytoplasm. The enzyme catalyses alpha-L-rhamnose = beta-L-rhamnose. The protein operates within carbohydrate metabolism; L-rhamnose metabolism. Functionally, involved in the anomeric conversion of L-rhamnose. The polypeptide is L-rhamnose mutarotase (Bacillus subtilis (strain 168)).